The primary structure comprises 802 residues: Putative transcriptional regulator cudA (802 aa).

4 disordered regions span residues 1 to 148 (MNQS…PSAI), 154 to 173 (ISNNSSLNSPSTTSSPNLLL), 381 to 446 (NNIN…NNEN), and 636 to 658 (QPQQQQQNQQQGQQPQQQQQQGQ). Low complexity predominate over residues 25-63 (NNNNNGNNGMMMNQQQMQQHVVPHLHHLQQQQQQPQQQQ). Polar residues predominate over residues 69 to 88 (DYSNSPNGTTNGSTMSPNCI). The span at 89–128 (NTNNNNNNNNNNNNNSNNNNNNNNNASNNLTSNKSSSTNT) shows a compositional bias: low complexity. The span at 129-142 (PQIGQLQASPANLT) shows a compositional bias: polar residues. Positions 381–445 (NNINNNNNIN…CNNNNNNNNE (65 aa)) are enriched in low complexity.

As to expression, expressed in the prestalk cells that constitute the slug tip (pstA cells) and in prespore cells (at protein level). Not expressed in the band of prestalk cells that lies behind the slug tip (pstO cells). Highly expressed in pstO derived papilla cells during culmination.

The protein resides in the nucleus. Its subcellular location is the nucleoplasm. Its function is as follows. Essential for normal culmination. May function as a transcriptional regulator. This chain is Putative transcriptional regulator cudA (cudA), found in Dictyostelium discoideum (Social amoeba).